The sequence spans 589 residues: Protein OS-9 homolog (589 aa).

An N-terminal signal peptide occupies residues 1-21 (MFSILNKLGIIWLALANISNC). N-linked (GlcNAc...) asparagine glycans are attached at residues asparagine 17, asparagine 61, and asparagine 90. The MRH domain occupies 130–288 (KDCVFAYGSN…VIGVPKLCSL (159 aa)). Residues cysteine 132 and cysteine 148 are joined by a disulfide bond. Residues tryptophan 143, glutamine 155, aspartate 241, arginine 247, glutamate 270, and tyrosine 276 each contribute to the a mannooligosaccharide derivative site. 2 disulfides stabilise this stretch: cysteine 240/cysteine 274 and cysteine 255/cysteine 286. Asparagine 426 is a glycosylation site (N-linked (GlcNAc...) asparagine). The segment at 497–520 (GKGSALDSTNNDKNNKATAENDKQ) is disordered. Basic and acidic residues predominate over residues 509–519 (KNNKATAENDK). Positions 586 to 589 (HDEL) match the Prevents secretion from ER motif.

Belongs to the OS-9 family. In terms of assembly, interacts with missfolded ER lumenal proteins.

The protein localises to the endoplasmic reticulum membrane. Lectin involved in the quality control of the secretory pathway. As a member of the endoplasmic reticulum-associated degradation lumenal (ERAD-L) surveillance system, targets misfolded endoplasmic reticulum lumenal glycoproteins for degradation. This chain is Protein OS-9 homolog (YOS9), found in Debaryomyces hansenii (strain ATCC 36239 / CBS 767 / BCRC 21394 / JCM 1990 / NBRC 0083 / IGC 2968) (Yeast).